We begin with the raw amino-acid sequence, 238 residues long: Phosphoribosylaminoimidazole-succinocarboxamide synthase (238 aa).

It belongs to the SAICAR synthetase family.

The enzyme catalyses 5-amino-1-(5-phospho-D-ribosyl)imidazole-4-carboxylate + L-aspartate + ATP = (2S)-2-[5-amino-1-(5-phospho-beta-D-ribosyl)imidazole-4-carboxamido]succinate + ADP + phosphate + 2 H(+). It participates in purine metabolism; IMP biosynthesis via de novo pathway; 5-amino-1-(5-phospho-D-ribosyl)imidazole-4-carboxamide from 5-amino-1-(5-phospho-D-ribosyl)imidazole-4-carboxylate: step 1/2. This is Phosphoribosylaminoimidazole-succinocarboxamide synthase from Alcanivorax borkumensis (strain ATCC 700651 / DSM 11573 / NCIMB 13689 / SK2).